Consider the following 421-residue polypeptide: Mannose-1-phosphate guanylyltransferase regulatory subunit alpha (421 aa).

A substrate-binding domain region spans residues 2–252 (LKAVILIGGP…EGCWSQIKSA (251 aa)). GDP-alpha-D-mannose-binding residues include E85 and Q248. The interval 274–421 (LASTKEGGPT…SRSFKNQIIL (148 aa)) is hexapeptide repeat domain. The C-loop stretch occupies residues 357-385 (TPSDPNPNDPYSKIDSETLFREGKLTPSI).

It belongs to the transferase hexapeptide repeat family. Component of the GMPPA-GMPPB mannose-1-phosphate guanylyltransferase complex composed of 4 gmppa subunits and 8 gmppb subunits; the complex is organized into three layers, a central layer made up of 2 gmppa dimers sandwiched between two layers each made up of 2 gmppb dimers.

The protein localises to the cytoplasm. Functionally, regulatory subunit of the GMPPA-GMPPB mannose-1-phosphate guanylyltransferase complex; reduces the catalytic activity of GMPPB when part of the complex. Mediates allosteric feedback inhibition of GMPPB catalytic activity upon binding GDP-alpha-D-mannose. Together with GMPPB regulates GDP-alpha-D-mannose levels. The sequence is that of Mannose-1-phosphate guanylyltransferase regulatory subunit alpha (gmppa) from Xenopus tropicalis (Western clawed frog).